A 223-amino-acid polypeptide reads, in one-letter code: MGQKVHPHGLRVGVIKEWDAKWYADKKNFADNLVEDHKIRNFVKKNSYAAGVSRIEIERAAKRIKLNIYTAKPGMIIGKGGQGIESLKNKLQKIVSNKNILINIVEVKRPEADAQLIAENIAQQLEKRIAFRRAMKQSIQRAMRSGVKGIKTACSGRLAGAEIARTEHYNEGTIPLQTLRADIDYGFAEADTTYGKIGVKVWVYKGEVLPARKNINEKEEANA.

Residues Ile39–Lys108 enclose the KH type-2 domain.

This sequence belongs to the universal ribosomal protein uS3 family. Part of the 30S ribosomal subunit. Forms a tight complex with proteins S10 and S14.

Binds the lower part of the 30S subunit head. Binds mRNA in the 70S ribosome, positioning it for translation. This chain is Small ribosomal subunit protein uS3, found in Clostridium botulinum (strain Hall / ATCC 3502 / NCTC 13319 / Type A).